Here is a 1119-residue protein sequence, read N- to C-terminus: Transcriptional repressor NF-X1 homolog (1119 aa).

A disordered region spans residues 1–214; sequence MADTEGTSSS…EPLTEEETKI (214 aa). Residues 7 to 17 show a composition bias toward low complexity; that stretch reads TSSSIPTSTNS. The span at 18-29 shows a compositional bias: basic residues; the sequence is SRHRASRGRGGR. A compositionally biased stretch (low complexity) spans 84–98; that stretch reads ANFTFNPNAATFNPA. The span at 113 to 128 shows a compositional bias: polar residues; the sequence is GASTHSNQNSRQQEPS. Basic and acidic residues predominate over residues 143–154; that stretch reads RQLEIQEQRGDS. Positions 157–167 are enriched in low complexity; sequence QNQSRQNNRNQ. Residues 174-193 show a composition bias toward polar residues; that stretch reads ANQQNKSVQNPSRNPGNSRR. The span at 198 to 214 shows a compositional bias: basic and acidic residues; the sequence is RRREQKEEPLTEEETKI. The RING-type; degenerate zinc finger occupies 235-287; sequence CAICYTRITTRQGVWSCKTCYHIFHISTGCITDWARSSRDKEGANTWRCPTCQ. 9 NF-X1-type zinc fingers span residues 330–348, 383–402, 439–458, 500–523, 565–584, 592–611, 649–668, 703–726, and 735–756; these read CPHP…ECKL, CGQH…ECTV, CGIH…ECET, CGTP…PCNL, CGMH…FCLQ, CGIH…PCLQ, CDHS…PCTQ, CGVH…KCTK, and CEHP…PCKA. The region spanning 867–937 is the R3H domain; the sequence is IDFVKSVEKI…KRSIVLTAVR (71 aa). 2 disordered regions span residues 1024–1047 and 1078–1119; these read VDSD…PKDW and AAKK…ELLE. Residues 1032–1041 are compositionally biased toward polar residues; that stretch reads NVPTTSNLVS. Positions 1086-1097 are enriched in acidic residues; that stretch reads PTWEDQCDEDAP.

The protein belongs to the NFX1 family.

It localises to the nucleus. May play a role in transcription regulation. The sequence is that of Transcriptional repressor NF-X1 homolog (nfx-1) from Caenorhabditis elegans.